The sequence spans 318 residues: Acetyl-coenzyme A carboxylase carboxyl transferase subunit alpha (318 aa).

A CoA carboxyltransferase C-terminal domain is found at 39 to 293; it reads KLEKKVDKMR…HEALARHLKE (255 aa).

The protein belongs to the AccA family. Acetyl-CoA carboxylase is a heterohexamer composed of biotin carboxyl carrier protein (AccB), biotin carboxylase (AccC) and two subunits each of ACCase subunit alpha (AccA) and ACCase subunit beta (AccD).

It localises to the cytoplasm. The enzyme catalyses N(6)-carboxybiotinyl-L-lysyl-[protein] + acetyl-CoA = N(6)-biotinyl-L-lysyl-[protein] + malonyl-CoA. It participates in lipid metabolism; malonyl-CoA biosynthesis; malonyl-CoA from acetyl-CoA: step 1/1. Its function is as follows. Component of the acetyl coenzyme A carboxylase (ACC) complex. First, biotin carboxylase catalyzes the carboxylation of biotin on its carrier protein (BCCP) and then the CO(2) group is transferred by the carboxyltransferase to acetyl-CoA to form malonyl-CoA. The chain is Acetyl-coenzyme A carboxylase carboxyl transferase subunit alpha from Geobacter metallireducens (strain ATCC 53774 / DSM 7210 / GS-15).